The following is a 152-amino-acid chain: Small ribosomal subunit protein bS6 (152 aa).

The disordered stretch occupies residues 96–152; that stretch reads HEEGPSAMLQKRDRDDRGERGDRGDRGDRGDRGFGGREDRPRRPRPTEESHGGEEEV.

It belongs to the bacterial ribosomal protein bS6 family.

Its function is as follows. Binds together with bS18 to 16S ribosomal RNA. In Xanthobacter autotrophicus (strain ATCC BAA-1158 / Py2), this protein is Small ribosomal subunit protein bS6.